We begin with the raw amino-acid sequence, 468 residues long: Intramembrane protease 2 (468 aa).

Residues 1-22 (MAEAATEIPPTASNVTVFTFEE) lie on the Lumenal side of the membrane. The N-linked (GlcNAc...) asparagine glycan is linked to Asn-14. Residues 23–43 (QATSSLALYGMSILCIIIGSI) form a helical membrane-spanning segment. The Cytoplasmic portion of the chain corresponds to 44–70 (RSAQYIRTNIDKKRLIEGSITMREARK). The helical transmembrane segment at 71 to 91 (FPISASLVLFGLYLFFKPAAE) threads the bilayer. The Lumenal portion of the chain corresponds to 92–168 (RFLWVARVFQ…TNLPTIQKAE (77 aa)). N-linked (GlcNAc...) asparagine glycans are attached at residues Asn-114 and Asn-123. A helical membrane pass occupies residues 169-189 (CMQLLTFLICFEGVNAFASLL). Over 190-247 (KPFVTAFLKKMPLVPSFLRFNAPYLFSLKKGNKEMEEGDIEDAKKKETEYLFKIDFDR) the chain is Cytoplasmic. The helical transmembrane segment at 248 to 265 (YDIIALLMCSPILISHLL) threads the bilayer. The Lumenal segment spans residues 266–267 (KR). Residues 268–284 (HWITNNIIGVSFSILGI) form a helical membrane-spanning segment. At 285–296 (ERLHLASFKAGS) the chain is on the cytoplasmic side. Residues 297–317 (LLLVGLFFYDIFWVFGTDVMT) form a helical membrane-spanning segment. Asp-306 is an active-site residue. Residues 318-343 (SVAKGIDAPILLQFPQDIYRNGIMEA) lie on the Lumenal side of the membrane. Residues 344–364 (SKHSMLGLGDIVIPGIFIALL) form a helical membrane-spanning segment. Residue Asp-353 is part of the active site. The Cytoplasmic segment spans residues 365-388 (RRFDYRVVQTTAESKAPQGSLKGR). Residues 389 to 409 (YYFVVTVVAYMAGLFITMAVM) form a helical membrane-spanning segment. Residues 410-415 (HHFKAA) are Lumenal-facing. Residues 416–436 (QPALLYLVPCCLFVPLLLAVI) traverse the membrane as a helical segment. The PAL motif lies at 417–419 (PAL). Over 437-468 (RGELSALWNYDESRHVDNEENRKKVDSGKKNN) the chain is Cytoplasmic.

Belongs to the peptidase A22B family.

It localises to the membrane. The protein localises to the endoplasmic reticulum membrane. Acts as intramembrane protease. In larvae, required for the complete shedding of the cuticle during molting, possibly by regulating cholesterol uptake via lrp-1. Involved in embryonic and larval development. The sequence is that of Intramembrane protease 2 from Caenorhabditis elegans.